Here is a 351-residue protein sequence, read N- to C-terminus: DNA-directed RNA polymerase subunit alpha (351 aa).

An alpha N-terminal domain (alpha-NTD) region spans residues 1–245; the sequence is MPRRNLLKGF…EHFTVFVNFD (245 aa). The tract at residues 261–351 is alpha C-terminal domain (alpha-CTD); it reads AVLELLNTKI…MRQKEEIDEA (91 aa).

The protein belongs to the RNA polymerase alpha chain family. In terms of assembly, homodimer. The RNAP catalytic core consists of 2 alpha, 1 beta, 1 beta' and 1 omega subunit. When a sigma factor is associated with the core the holoenzyme is formed, which can initiate transcription.

It carries out the reaction RNA(n) + a ribonucleoside 5'-triphosphate = RNA(n+1) + diphosphate. Its function is as follows. DNA-dependent RNA polymerase catalyzes the transcription of DNA into RNA using the four ribonucleoside triphosphates as substrates. The sequence is that of DNA-directed RNA polymerase subunit alpha from Treponema pallidum (strain Nichols).